The primary structure comprises 445 residues: Tubulin alpha-1 chain (445 aa).

Q11 serves as a coordination point for GTP. K40 carries the N6-acetyllysine modification. E71, S140, G144, T145, T179, N206, and N228 together coordinate GTP. Residue E71 coordinates Mg(2+). The active site involves E254.

This sequence belongs to the tubulin family. Dimer of alpha and beta chains. A typical microtubule is a hollow water-filled tube with an outer diameter of 25 nm and an inner diameter of 15 nM. Alpha-beta heterodimers associate head-to-tail to form protofilaments running lengthwise along the microtubule wall with the beta-tubulin subunit facing the microtubule plus end conferring a structural polarity. Microtubules usually have 13 protofilaments but different protofilament numbers can be found in some organisms and specialized cells. The cofactor is Mg(2+). In terms of processing, acetylation of alpha chains at Lys-40 stabilizes microtubules and affects affinity and processivity of microtubule motors. This modification has a role in multiple cellular functions, ranging from cell motility, cell cycle progression or cell differentiation to intracellular trafficking and signaling.

It localises to the cytoplasm. The protein resides in the cytoskeleton. The enzyme catalyses GTP + H2O = GDP + phosphate + H(+). In terms of biological role, tubulin is the major constituent of microtubules, a cylinder consisting of laterally associated linear protofilaments composed of alpha- and beta-tubulin heterodimers. Microtubules grow by the addition of GTP-tubulin dimers to the microtubule end, where a stabilizing cap forms. Below the cap, tubulin dimers are in GDP-bound state, owing to GTPase activity of alpha-tubulin. This is Tubulin alpha-1 chain from Stylonychia lemnae (Ciliate).